The chain runs to 157 residues: NAD(P)H-quinone oxidoreductase subunit N (157 aa).

Belongs to the complex I NdhN subunit family. In terms of assembly, NDH-1 can be composed of about 15 different subunits; different subcomplexes with different compositions have been identified which probably have different functions.

It localises to the cellular thylakoid membrane. It catalyses the reaction a plastoquinone + NADH + (n+1) H(+)(in) = a plastoquinol + NAD(+) + n H(+)(out). The enzyme catalyses a plastoquinone + NADPH + (n+1) H(+)(in) = a plastoquinol + NADP(+) + n H(+)(out). Functionally, NDH-1 shuttles electrons from an unknown electron donor, via FMN and iron-sulfur (Fe-S) centers, to quinones in the respiratory and/or the photosynthetic chain. The immediate electron acceptor for the enzyme in this species is believed to be plastoquinone. Couples the redox reaction to proton translocation, and thus conserves the redox energy in a proton gradient. Cyanobacterial NDH-1 also plays a role in inorganic carbon-concentration. In Picosynechococcus sp. (strain ATCC 27264 / PCC 7002 / PR-6) (Agmenellum quadruplicatum), this protein is NAD(P)H-quinone oxidoreductase subunit N.